Consider the following 273-residue polypeptide: Chondrolectin (273 aa).

A signal peptide spans 1–21; the sequence is MSRVVSLLLGAALLCGHGAFC. The Extracellular segment spans residues 22 to 216; the sequence is RRVVSGQKVC…VVTEAGIIPN (195 aa). A C-type lectin domain is found at 35 to 179; that stretch reads FKHPCYKMAY…CNMKHNYICK (145 aa). 2 disulfide bridges follow: Cys-61–Cys-178 and Cys-144–Cys-170. N-linked (GlcNAc...) asparagine glycosylation is present at Asn-86. The helical transmembrane segment at 217–237 threads the bilayer; the sequence is LIYVVIPTIPLLLLILVAFGT. Residues 238–273 are Cytoplasmic-facing; it reads CCFQMLHKSKGRTKTSPNQSTLWISKSTRKESGMEV. Residues 248–273 form a disordered region; that stretch reads GRTKTSPNQSTLWISKSTRKESGMEV. Residues 251-263 are compositionally biased toward polar residues; that stretch reads KTSPNQSTLWISK.

In terms of assembly, interacts with RABGGTB. N-glycosylated. In terms of tissue distribution, found in spleen, testis, prostate and fetal liver. Expression limited to vascular muscle of testis, smooth muscle of prostate stroma, heart muscle, skeletal muscle, crypts of small intestine, and red pulp of spleen. B lymphocytes express isoform 2 only; peripheral blood T lymphocytes express isoform 3 only; granulocytes and monocytes express neither isoform 2 nor isoform 3. During development of T lymphocytes, bone marrow progenitor cells express isoform 2 only; thymocytes at different stages of maturation express predominantly isoform 2 and weakly isoform 3, and mature thymocytes express only isoform 2.

The protein localises to the cytoplasm. The protein resides in the membrane. It is found in the endoplasmic reticulum. Its subcellular location is the endoplasmic reticulum membrane. Functionally, may play a role in the development of the nervous system such as in neurite outgrowth and elongation. May be involved in motor axon growth and guidance. This is Chondrolectin (CHODL) from Homo sapiens (Human).